A 202-amino-acid chain; its full sequence is ATP-dependent Clp protease proteolytic subunit (202 aa).

Serine 98 (nucleophile) is an active-site residue. The active site involves histidine 123.

This sequence belongs to the peptidase S14 family. Fourteen ClpP subunits assemble into 2 heptameric rings which stack back to back to give a disk-like structure with a central cavity, resembling the structure of eukaryotic proteasomes.

It is found in the cytoplasm. It carries out the reaction Hydrolysis of proteins to small peptides in the presence of ATP and magnesium. alpha-casein is the usual test substrate. In the absence of ATP, only oligopeptides shorter than five residues are hydrolyzed (such as succinyl-Leu-Tyr-|-NHMec, and Leu-Tyr-Leu-|-Tyr-Trp, in which cleavage of the -Tyr-|-Leu- and -Tyr-|-Trp bonds also occurs).. Cleaves peptides in various proteins in a process that requires ATP hydrolysis. Has a chymotrypsin-like activity. Plays a major role in the degradation of misfolded proteins. This is ATP-dependent Clp protease proteolytic subunit from Magnetococcus marinus (strain ATCC BAA-1437 / JCM 17883 / MC-1).